Here is a 280-residue protein sequence, read N- to C-terminus: uncharacterized protein (280 aa).

Basic residues predominate over residues 1 to 10 (MSSSIKKLKK). The interval 1 to 45 (MSSSIKKLKKDTKDTDKTPSKKIYQETHNSEDSEDSEDSDNENNT) is disordered. Positions 11 to 31 (DTKDTDKTPSKKIYQETHNSE) are enriched in basic and acidic residues. The span at 32 to 41 (DSEDSEDSDN) shows a compositional bias: acidic residues.

This is an uncharacterized protein from Acanthamoeba polyphaga mimivirus (APMV).